A 138-amino-acid polypeptide reads, in one-letter code: Large ribosomal subunit protein eL32 (138 aa).

Belongs to the eukaryotic ribosomal protein eL32 family.

In Saccharolobus islandicus (strain Y.N.15.51 / Yellowstone #2) (Sulfolobus islandicus), this protein is Large ribosomal subunit protein eL32.